Consider the following 768-residue polypeptide: Degenerin mec-4 (768 aa).

Topologically, residues 1 to 109 (MSWMQNLKNY…GEAPNVYYRA (109 aa)) are cytoplasmic. Residues 110–130 (VWVMLFLGCMIMLYLNAQSVL) form a helical membrane-spanning segment. At 131–718 (DKYNRNEKIV…VNLLADFGGQ (588 aa)) the chain is on the extracellular side. Disordered stretches follow at residues 187–221 (AGGN…GKRD) and 237–260 (GSQG…ETTT). Residues 189–200 (GNKEHDGEKEVI) are compositionally biased toward basic and acidic residues. Low complexity predominate over residues 203-212 (APTTPAPTTK). The span at 243–252 (EQEDKDDEKE) shows a compositional bias: acidic residues. Residues asparagine 336, asparagine 357, asparagine 480, asparagine 484, asparagine 503, and asparagine 671 are each glycosylated (N-linked (GlcNAc...) asparagine). The chain crosses the membrane as a helical span at residues 719 to 739 (LGLWCGISFLTCCEFVFLFLE). Residues 740–768 (TAYMSAEHNYSLYKKKKAEKAKKVASGSF) are Cytoplasmic-facing.

The protein belongs to the amiloride-sensitive sodium channel (TC 1.A.6) family. The channel is probably composed of at least the mec-2, mec-4, mec-6 and mec-10 subunits.

The protein resides in the membrane. In terms of biological role, probable sodium channel subunit. May be needed for mechanosensory transduction (touch sensitivity). Negatively regulates the turning step of male mating behavior. The protein is Degenerin mec-4 (mec-4) of Caenorhabditis briggsae.